We begin with the raw amino-acid sequence, 483 residues long: Adenylyltransferase and sulfurtransferase uba4 (483 aa).

Residues G100, D121, 128–132 (SNLHR), K145, and 178–179 (DN) contribute to the ATP site. The Zn(2+) site is built by C227 and C230. C244 functions as the Glycyl thioester intermediate; for adenylyltransferase activity in the catalytic mechanism. Zn(2+) is bound by residues C306 and C309. The 116-residue stretch at 366–481 (ISKEPTIIDV…WREQIDPDWP (116 aa)) folds into the Rhodanese domain. C436 acts as the Cysteine persulfide intermediate; for sulfurtransferase activity in catalysis.

It in the N-terminal section; belongs to the HesA/MoeB/ThiF family. UBA4 subfamily. Requires Zn(2+) as cofactor.

It is found in the cytoplasm. The protein localises to the cytosol. It carries out the reaction [molybdopterin-synthase sulfur-carrier protein]-C-terminal Gly-Gly + ATP + H(+) = [molybdopterin-synthase sulfur-carrier protein]-C-terminal Gly-Gly-AMP + diphosphate. The enzyme catalyses [molybdopterin-synthase sulfur-carrier protein]-C-terminal Gly-Gly-AMP + S-sulfanyl-L-cysteinyl-[cysteine desulfurase] + AH2 = [molybdopterin-synthase sulfur-carrier protein]-C-terminal-Gly-aminoethanethioate + L-cysteinyl-[cysteine desulfurase] + A + AMP + 2 H(+). It participates in tRNA modification; 5-methoxycarbonylmethyl-2-thiouridine-tRNA biosynthesis. In terms of biological role, plays a central role in 2-thiolation of mcm(5)S(2)U at tRNA wobble positions of cytosolic tRNA(Lys), tRNA(Glu) and tRNA(Gln). Also essential during biosynthesis of the molybdenum cofactor. Acts by mediating the C-terminal thiocarboxylation of sulfur carriers urm1 and mocs2a. Its N-terminus first activates urm1 and mocs2a as acyl-adenylates (-COAMP), then the persulfide sulfur on the catalytic cysteine is transferred to urm1 and mocs2a to form thiocarboxylation (-COSH) of their C-terminus. The reaction probably involves hydrogen sulfide that is generated from the persulfide intermediate and that acts as a nucleophile towards urm1 and mocs2a. Subsequently, a transient disulfide bond is formed. Does not use thiosulfate as sulfur donor; nfs1 probably acting as a sulfur donor for thiocarboxylation reactions. This Neosartorya fischeri (strain ATCC 1020 / DSM 3700 / CBS 544.65 / FGSC A1164 / JCM 1740 / NRRL 181 / WB 181) (Aspergillus fischerianus) protein is Adenylyltransferase and sulfurtransferase uba4.